The sequence spans 436 residues: Ribulose bisphosphate carboxylase large chain (436 aa).

Residues asparagine 104 and threonine 154 each contribute to the substrate site. The active-site Proton acceptor is the lysine 156. Residue lysine 158 participates in substrate binding. Residues lysine 182, aspartate 184, and glutamate 185 each contribute to the Mg(2+) site. Residue lysine 182 is modified to N6-carboxylysine. Histidine 275 acts as the Proton acceptor in catalysis. Residues arginine 276, histidine 308, and serine 360 each contribute to the substrate site.

This sequence belongs to the RuBisCO large chain family. Type I subfamily. Heterohexadecamer of 8 large chains and 8 small chains. Requires Mg(2+) as cofactor.

It localises to the plastid. The protein resides in the chloroplast. It catalyses the reaction 2 (2R)-3-phosphoglycerate + 2 H(+) = D-ribulose 1,5-bisphosphate + CO2 + H2O. It carries out the reaction D-ribulose 1,5-bisphosphate + O2 = 2-phosphoglycolate + (2R)-3-phosphoglycerate + 2 H(+). Functionally, ruBisCO catalyzes two reactions: the carboxylation of D-ribulose 1,5-bisphosphate, the primary event in carbon dioxide fixation, as well as the oxidative fragmentation of the pentose substrate in the photorespiration process. Both reactions occur simultaneously and in competition at the same active site. This chain is Ribulose bisphosphate carboxylase large chain, found in Euglena myxocylindracea.